Consider the following 216-residue polypeptide: Twisted gastrulation protein homolog 1-A (216 aa).

A signal peptide spans 1 to 25 (MKPSFLHIPAAALLLCSLWILPIYC). N-linked (GlcNAc...) asparagine glycosylation is found at Asn-52, Asn-81, and Asn-145.

It belongs to the twisted gastrulation protein family. Binds directly to bmp2, bmp4 and bmp7 and can form a ternary complex with bmps and chordin, thus preventing the binding of bmps to their cell surface receptors. As to expression, posterior defects are induced by overexpression. This may arise through alteration of bmp4 or chrd function in the developing tailbud region.

The protein resides in the secreted. Functionally, involved in dorsal-ventral patterning, permitting peak BMP signaling by antagonizing the residual anti-BMP activity of the cleavage products of chrd. Functions to promote the formation of ventral mesoderm by increasing the activity of bmp7 and other BMPS. Seems to antagonize BMP signaling by forming ternary complexes with chrd and BMPs, thereby preventing BMPs from binding to their receptors. In addition to the anti-BMP function, also has pro-BMP activity, partly mediated by cleavage and degradation of chrd, which releases BMPs from ternary complexes. May be an important modulator of BMP-regulated cartilage development and chondrocyte differentiation. The polypeptide is Twisted gastrulation protein homolog 1-A (twsg1-a) (Xenopus laevis (African clawed frog)).